Reading from the N-terminus, the 35-residue chain is Photosystem II reaction center protein T (35 aa).

A helical membrane pass occupies residues 3–23; the sequence is ALVYTFLLVSTLGIIFFAIFF.

It belongs to the PsbT family. In terms of assembly, PSII is composed of 1 copy each of membrane proteins PsbA, PsbB, PsbC, PsbD, PsbE, PsbF, PsbH, PsbI, PsbJ, PsbK, PsbL, PsbM, PsbT, PsbY, PsbZ, Psb30/Ycf12, at least 3 peripheral proteins of the oxygen-evolving complex and a large number of cofactors. It forms dimeric complexes.

The protein localises to the plastid. It is found in the chloroplast thylakoid membrane. Found at the monomer-monomer interface of the photosystem II (PS II) dimer, plays a role in assembly and dimerization of PSII. PSII is a light-driven water plastoquinone oxidoreductase, using light energy to abstract electrons from H(2)O, generating a proton gradient subsequently used for ATP formation. The polypeptide is Photosystem II reaction center protein T (Stewartia pseudocamellia (Japanese stewartia)).